We begin with the raw amino-acid sequence, 927 residues long: Lysine-specific demethylase JMJ28 (927 aa).

One can recognise a WRC domain in the interval 7–52; the sequence is VPDEFRCNRSDGKQWRCKRRALEGKKMCESHHSQQSLKRSKQKVAE. The short motif at 30–37 is the Nuclear localization signal 1 element; that stretch reads GKKMCESH. The interval 30-92 is disordered; the sequence is GKKMCESHHS…RLGKSKRKRV (63 aa). Residues 80-91 show a composition bias toward basic residues; that stretch reads RSKRLGKSKRKR. The Nuclear localization signal 2 motif lies at 127–134; that stretch reads EKRKRLPN. Cysteine 227, cysteine 230, cysteine 241, cysteine 244, cysteine 250, cysteine 253, cysteine 269, and cysteine 272 together coordinate Zn(2+). The segment at 227 to 273 adopts an RING-type; degenerate zinc-finger fold; it reads CHWCGTRGFGDLISCLSCEREFFCIDCIEKRNKGSKEEVEKKCPVCR. A compositionally biased stretch (basic and acidic residues) spans 330–339; sequence ENDAEKKEGN. 2 disordered regions span residues 330–359 and 701–736; these read ENDA…QPCS and RSKN…SQHC. The region spanning 601 to 881 is the JmjC domain; sequence FPNHYAEILN…ESIKRVKELN (281 aa).

The protein belongs to the JARID1 histone demethylase family. As to quaternary structure, interacts with the FBH transcription factors FBH1, FBH2, FBH3 and FBH4. It depends on Fe(2+) as a cofactor. Expressed in inflorescences, flowers, roots, siliques, leaves and stems, especially in the vasculature (mainly phloem), with highest levels in floral organs. Present at high levels in flowers, shoot apex and young seeds, but observed at low levels in dry seeds, root apex and anthers.

Its subcellular location is the nucleus. In terms of biological role, may function as histone H3 lysine demethylase and be involved in regulation of gene expression. Regulates flowering time by promoting CONSTANS (CO) and CONSTANS-LIKE genes (e.g. COL2 and COL5) expression via interaction with FBH transcription factors (FBH1, FBH2, FBH3 and FBH4) at their loci to remove H3K9me2 repressive histone marks. Also modulates the expression of several developmental genes such as MYB30, TFS1, AGL6 and RVE2. The protein is Lysine-specific demethylase JMJ28 of Arabidopsis thaliana (Mouse-ear cress).